We begin with the raw amino-acid sequence, 271 residues long: Aquaporin-2 (271 aa).

Residues 1–11 (MWELRSIAFSR) are Cytoplasmic-facing. Residues 12 to 32 (AVLAEFLATLLFVFFGLGSAL) form a helical membrane-spanning segment. Topologically, residues 33–40 (QWASSPPS) are extracellular. A helical transmembrane segment spans residues 41–59 (VLQIAVAFGLGIGILVQAL). Residues 60–64 (GHVSG) are Cytoplasmic-facing. An intramembrane region (discontinuously helical) is located at residues 65 to 74 (AHINPAVTVA). Positions 68-70 (NPA) match the NPA 1 motif. The Cytoplasmic portion of the chain corresponds to 75–85 (CLVGCHVSFLR). Residues 86-107 (AAFYVAAQLLGAVAGAAILHEI) traverse the membrane as a helical segment. The Extracellular segment spans residues 108 to 127 (TPVEIRGDLAVNALHNNATA). A glycan (N-linked (GlcNAc...) asparagine) is linked at N124. The chain crosses the membrane as a helical span at residues 128–148 (GQAVTVELFLTMQLVLCIFAS). The Cytoplasmic portion of the chain corresponds to 149-156 (TDERRGDN). Residues 157–176 (LGSPALSIGFSVTLGHLLGI) traverse the membrane as a helical segment. Over 177–180 (YFTG) the chain is Extracellular. The segment at residues 181-193 (CSMNPARSLAPAV) is an intramembrane region (discontinuously helical). The NPA 2 motif lies at 184-186 (NPA). The Extracellular portion of the chain corresponds to 194–201 (VTGKFDDH). A helical transmembrane segment spans residues 202–222 (WVFWIGPLVGAIIGSLLYNYL). The Cytoplasmic portion of the chain corresponds to 223-271 (LFPSAKSLQERLAVLKGLEPDTDWEEREVRRRQSVELHSPQSLPRGSKA). Residues 251–271 (VRRRQSVELHSPQSLPRGSKA) are disordered. Phosphoserine is present on residues S256, S261, S264, and S269. Polar residues predominate over residues 261–271 (SPQSLPRGSKA).

Belongs to the MIP/aquaporin (TC 1.A.8) family. In terms of assembly, homotetramer. In terms of processing, ser-256 phosphorylation is necessary and sufficient for expression at the apical membrane. Endocytosis is not phosphorylation-dependent. N-glycosylated. As to expression, detected in kidney, in cortical and the medullary collecting tubules (at protein level). Detected in kidney medulla and cortex.

It localises to the apical cell membrane. The protein resides in the basolateral cell membrane. Its subcellular location is the cell membrane. It is found in the cytoplasmic vesicle membrane. The protein localises to the golgi apparatus. It localises to the trans-Golgi network membrane. The catalysed reaction is H2O(in) = H2O(out). It catalyses the reaction glycerol(in) = glycerol(out). In terms of biological role, forms a water-specific channel that provides the plasma membranes of renal collecting duct with high permeability to water, thereby permitting water to move in the direction of an osmotic gradient. Plays an essential role in renal water homeostasis. Could also be permeable to glycerol. In Rattus norvegicus (Rat), this protein is Aquaporin-2.